A 162-amino-acid chain; its full sequence is NADH-quinone oxidoreductase subunit I (162 aa).

4Fe-4S ferredoxin-type domains are found at residues 54-83 and 93-122; these read RRYE…IESE and TRYD…ETQI. [4Fe-4S] cluster is bound by residues Cys-63, Cys-66, Cys-69, Cys-73, Cys-102, Cys-105, Cys-108, and Cys-112.

This sequence belongs to the complex I 23 kDa subunit family. NDH-1 is composed of 14 different subunits. Subunits NuoA, H, J, K, L, M, N constitute the membrane sector of the complex. Requires [4Fe-4S] cluster as cofactor.

The protein localises to the cell inner membrane. The enzyme catalyses a quinone + NADH + 5 H(+)(in) = a quinol + NAD(+) + 4 H(+)(out). In terms of biological role, NDH-1 shuttles electrons from NADH, via FMN and iron-sulfur (Fe-S) centers, to quinones in the respiratory chain. The immediate electron acceptor for the enzyme in this species is believed to be ubiquinone. Couples the redox reaction to proton translocation (for every two electrons transferred, four hydrogen ions are translocated across the cytoplasmic membrane), and thus conserves the redox energy in a proton gradient. This is NADH-quinone oxidoreductase subunit I from Burkholderia pseudomallei (strain 668).